The chain runs to 348 residues: 3-isopropylmalate dehydrogenase (348 aa).

NAD(+) is bound at residue 76–87 (GPKWTDPNNRPE). Arginine 94, arginine 104, arginine 132, and aspartate 217 together coordinate substrate. Mg(2+) contacts are provided by aspartate 217, aspartate 241, and aspartate 245. 275–287 (GSAPDIAGKNVAN) is an NAD(+) binding site.

The protein belongs to the isocitrate and isopropylmalate dehydrogenases family. LeuB type 1 subfamily. Homodimer. Mg(2+) is required as a cofactor. Mn(2+) serves as cofactor.

The protein resides in the cytoplasm. It carries out the reaction (2R,3S)-3-isopropylmalate + NAD(+) = 4-methyl-2-oxopentanoate + CO2 + NADH. The protein operates within amino-acid biosynthesis; L-leucine biosynthesis; L-leucine from 3-methyl-2-oxobutanoate: step 3/4. Its function is as follows. Catalyzes the oxidation of 3-carboxy-2-hydroxy-4-methylpentanoate (3-isopropylmalate) to 3-carboxy-4-methyl-2-oxopentanoate. The product decarboxylates to 4-methyl-2 oxopentanoate. The protein is 3-isopropylmalate dehydrogenase of Staphylococcus aureus (strain Mu50 / ATCC 700699).